The chain runs to 196 residues: Regulator of G-protein signaling 1 (196 aa).

The tract at residues 1–27 is disordered; it reads MPGMFFSANPKDLKGTDQSLLDDKTQK. Over residues 11–25 the composition is skewed to basic and acidic residues; it reads KDLKGTDQSLLDDKT. Residues 72–187 enclose the RGS domain; sequence SLEKLLANQT…LKSNIYLNLL (116 aa).

Interacts with GNAI1 and GNAQ.

It is found in the cell membrane. Its subcellular location is the cytoplasm. The protein localises to the cytosol. Regulates G protein-coupled receptor signaling cascades, including signaling downstream of the N-formylpeptide chemoattractant receptors and leukotriene receptors. Inhibits B cell chemotaxis toward CXCL12. Inhibits signal transduction by increasing the GTPase activity of G protein alpha subunits, thereby driving them into their inactive GDP-bound form. The chain is Regulator of G-protein signaling 1 (RGS1) from Equus caballus (Horse).